The sequence spans 262 residues: 3-methyl-2-oxobutanoate hydroxymethyltransferase (262 aa).

Mg(2+)-binding residues include Asp44 and Asp83. 3-methyl-2-oxobutanoate contacts are provided by residues 44–45 (DS), Asp83, and Lys112. Glu114 serves as a coordination point for Mg(2+). Glu181 functions as the Proton acceptor in the catalytic mechanism.

This sequence belongs to the PanB family. In terms of assembly, homodecamer; pentamer of dimers. Mg(2+) serves as cofactor.

Its subcellular location is the cytoplasm. It carries out the reaction 3-methyl-2-oxobutanoate + (6R)-5,10-methylene-5,6,7,8-tetrahydrofolate + H2O = 2-dehydropantoate + (6S)-5,6,7,8-tetrahydrofolate. The protein operates within cofactor biosynthesis; (R)-pantothenate biosynthesis; (R)-pantoate from 3-methyl-2-oxobutanoate: step 1/2. Catalyzes the reversible reaction in which hydroxymethyl group from 5,10-methylenetetrahydrofolate is transferred onto alpha-ketoisovalerate to form ketopantoate. The chain is 3-methyl-2-oxobutanoate hydroxymethyltransferase from Thiobacillus denitrificans (strain ATCC 25259 / T1).